The sequence spans 280 residues: RAD52 motif-containing protein 1 (280 aa).

The RRM domain maps to 18–101; it reads KTIFIWDIQP…SPLKVRLSTK (84 aa).

Homodimer.

The protein localises to the nucleus. The protein resides in the cytoplasm. Its subcellular location is the nucleolus. In terms of biological role, may confer resistance to the antitumor agent cisplatin. Binds to DNA and RNA. This Danio rerio (Zebrafish) protein is RAD52 motif-containing protein 1 (rdm1).